Reading from the N-terminus, the 256-residue chain is Acetyl-coenzyme A carboxylase carboxyl transferase subunit alpha (256 aa).

The region spanning 1–236 (MTDVARILKE…KLHLIDEITQ (236 aa)) is the CoA carboxyltransferase C-terminal domain.

The protein belongs to the AccA family. In terms of assembly, acetyl-CoA carboxylase is a heterohexamer composed of biotin carboxyl carrier protein (AccB), biotin carboxylase (AccC) and two subunits each of ACCase subunit alpha (AccA) and ACCase subunit beta (AccD).

It localises to the cytoplasm. The enzyme catalyses N(6)-carboxybiotinyl-L-lysyl-[protein] + acetyl-CoA = N(6)-biotinyl-L-lysyl-[protein] + malonyl-CoA. It functions in the pathway lipid metabolism; malonyl-CoA biosynthesis; malonyl-CoA from acetyl-CoA: step 1/1. Component of the acetyl coenzyme A carboxylase (ACC) complex. First, biotin carboxylase catalyzes the carboxylation of biotin on its carrier protein (BCCP) and then the CO(2) group is transferred by the carboxyltransferase to acetyl-CoA to form malonyl-CoA. This chain is Acetyl-coenzyme A carboxylase carboxyl transferase subunit alpha, found in Streptococcus equi subsp. zooepidemicus (strain H70).